Consider the following 912-residue polypeptide: Protein translocase subunit SecA (912 aa).

ATP contacts are provided by residues Q87, 105 to 109, and D508; that span reads GEGKT. The disordered stretch occupies residues 864–912; sequence AEEEVEQMQGGNAPVPVSQVTRDEPKVGRNDPCPCGSGKKYKHCHGQLS. Zn(2+)-binding residues include C896, C898, C907, and H908. Over residues 902 to 912 the composition is skewed to basic residues; it reads KKYKHCHGQLS.

This sequence belongs to the SecA family. In terms of assembly, monomer and homodimer. Part of the essential Sec protein translocation apparatus which comprises SecA, SecYEG and auxiliary proteins SecDF-YajC and YidC. It depends on Zn(2+) as a cofactor.

It localises to the cell inner membrane. The protein localises to the cytoplasm. The catalysed reaction is ATP + H2O + cellular proteinSide 1 = ADP + phosphate + cellular proteinSide 2.. Functionally, part of the Sec protein translocase complex. Interacts with the SecYEG preprotein conducting channel. Has a central role in coupling the hydrolysis of ATP to the transfer of proteins into and across the cell membrane, serving both as a receptor for the preprotein-SecB complex and as an ATP-driven molecular motor driving the stepwise translocation of polypeptide chains across the membrane. The sequence is that of Protein translocase subunit SecA from Xanthomonas euvesicatoria pv. vesicatoria (strain 85-10) (Xanthomonas campestris pv. vesicatoria).